A 310-amino-acid chain; its full sequence is Homoserine kinase (310 aa).

Residue 91–101 (PIGSGLGSSAC) participates in ATP binding.

This sequence belongs to the GHMP kinase family. Homoserine kinase subfamily.

The protein localises to the cytoplasm. The catalysed reaction is L-homoserine + ATP = O-phospho-L-homoserine + ADP + H(+). It participates in amino-acid biosynthesis; L-threonine biosynthesis; L-threonine from L-aspartate: step 4/5. Its function is as follows. Catalyzes the ATP-dependent phosphorylation of L-homoserine to L-homoserine phosphate. The chain is Homoserine kinase from Escherichia coli O157:H7.